Reading from the N-terminus, the 157-residue chain is DNA gyrase inhibitor (157 aa).

It belongs to the DNA gyrase inhibitor family. In terms of assembly, interacts with DNA gyrase.

It is found in the cytoplasm. Its function is as follows. Inhibits the supercoiling activity of DNA gyrase. Acts by inhibiting DNA gyrase at an early step, prior to (or at the step of) binding of DNA by the gyrase. It protects cells against toxins that target DNA gyrase, by inhibiting activity of these toxins and reducing the formation of lethal double-strand breaks in the cell. The protein is DNA gyrase inhibitor of Cronobacter sakazakii (strain ATCC BAA-894) (Enterobacter sakazakii).